The chain runs to 395 residues: Chalcone synthase (395 aa).

At Val-2 the chain carries N-acetylvaline. Val-2 carries the N-acetylalanine modification. Cys-169 is an active-site residue.

It belongs to the thiolase-like superfamily. Chalcone/stilbene synthases family.

It catalyses the reaction (E)-4-coumaroyl-CoA + 3 malonyl-CoA + 3 H(+) = 2',4,4',6'-tetrahydroxychalcone + 3 CO2 + 4 CoA. It functions in the pathway secondary metabolite biosynthesis; flavonoid biosynthesis. Functionally, the primary product of this enzyme is 4,2',4',6'-tetrahydroxychalcone (also termed naringenin-chalcone or chalcone) which can under specific conditions spontaneously isomerize into naringenin. The protein is Chalcone synthase (CHS) of Arabidopsis thaliana (Mouse-ear cress).